The primary structure comprises 3674 residues: Dystrophin-1 (3674 aa).

The segment at 1–25 (MLFSGASTAKPKKDEKKDKKSDRDP) is disordered. Residues 11–25 (PKKDEKKDKKSDRDP) are compositionally biased toward basic and acidic residues. The interval 30–39 (QEWVFVRWAN) is actin-binding. The region spanning 129 to 234 (EKLSEAIKQW…YLMSLYLAMI (106 aa)) is the Calponin-homology (CH) domain. Residues 265 to 325 (SQPSTSSSSA…KSGKSKKARR (61 aa)) form a disordered region. 3 Spectrin repeats span residues 327-435 (EQLA…VLQQ), 436-541 (QIHL…KLDG), and 612-656 (CELV…TLVK). Positions 655–674 (VKSGKADVKQVQESQNEQKE) are enriched in basic and acidic residues. Disordered regions lie at residues 655 to 689 (VKSG…TEGE), 968 to 991 (NSQM…EKRR), 1587 to 1606 (ASAE…SSPS), 1796 to 1833 (LSAT…SRSS), and 2387 to 2466 (MNDS…GSTG). Residues 675–685 (QPASSEGLSTD) are compositionally biased toward polar residues. Over residues 975 to 991 (TVEKAETRKAEMEEKRR) the composition is skewed to basic and acidic residues. Basic and acidic residues predominate over residues 1796–1830 (LSATEKKPVETVKSTIPDRPEVPEEPEKSSPDRTS). Positions 2391–2411 (GGDTTESRSTVVEMTSVHTKQ) are enriched in polar residues. Spectrin repeat units lie at residues 2576 to 2673 (RNEM…VLEA), 2725 to 2789 (FKTL…RLEK), 2792 to 2905 (QEWE…RLKK), and 2926 to 3032 (QRLQ…AVRN). A WW domain is found at 3047–3081 (QSVTLPWQRAISKSNLLPYYIEQTSEKTQWEHPVW). The ZZ-type zinc-finger motif lies at 3301 to 3357 (KHASKCNVCKMFPIIGIRYRCLTCFNCDLCQNCFFSQRTAKSHRTNHPMQEYCEKTT). Zn(2+) contacts are provided by C3306, C3309, C3321, C3324, C3330, C3333, H3343, and H3347. 2 disordered regions span residues 3481-3522 (STME…TQSQ) and 3568-3645 (KQQA…QMQN). A compositionally biased stretch (polar residues) spans 3568 to 3579 (KQQAPLSTNSLL).

As to quaternary structure, component of the dystrophin glycoprotein complex (DGC). Interacts with dyb-1 and stn-1 to form the DGC. Interacts with stn-2. In terms of tissue distribution, expressed in body wall, head, pharyngeal and vulval muscles, from late embryogenesis to adulthood (at protein level).

It localises to the cell membrane. The protein resides in the sarcolemma. Its subcellular location is the cytoplasm. The protein localises to the cytoskeleton. In terms of biological role, plays a role in cholinergic transmission and as a functional partner of dystrobrevin (dyb-1), necessary for muscle maintenance. Required for neuronal positioning. May play a role in the localization of slo-1 near dense bodies in the muscle. In Caenorhabditis elegans, this protein is Dystrophin-1 (dys-1).